The chain runs to 309 residues: MILGTRGSALAIAQADLVTKMLEEKGHELTRNVIKTSGDVFTDRPLHEVAGVGVFVRELDDRMIEGEVDIAVHSMKDLPTVRPPELAIAAVLKRDSPYDVLLTADGSTLDELPDGAIIGTTSMRRRAQLLRYRPDLNVEDLRGNINTRIQKLKAGQYDGILLAEAGLQRMGWDMDVQRLPAEAFCPSANQGTIVVVTRADDEAERACSVLNHERSRMETEVERLLITDVEGGCIVPIGSFAQMNEDGDEIHVLVEVLAVDGTREIRIEDDIPVKNYREHALSIGRMLVEMGGKELVQEAVCEMSGCDDE.

An S-(dipyrrolylmethanemethyl)cysteine modification is found at Cys-233.

It belongs to the HMBS family. Dipyrromethane serves as cofactor.

It catalyses the reaction 4 porphobilinogen + H2O = hydroxymethylbilane + 4 NH4(+). The protein operates within porphyrin-containing compound metabolism; protoporphyrin-IX biosynthesis; coproporphyrinogen-III from 5-aminolevulinate: step 2/4. Functionally, tetrapolymerization of the monopyrrole PBG into the hydroxymethylbilane pre-uroporphyrinogen in several discrete steps. The protein is Probable porphobilinogen deaminase of Methanococcoides burtonii (strain DSM 6242 / NBRC 107633 / OCM 468 / ACE-M).